The chain runs to 124 residues: MRCLCSWLCLLLPLSACFPLLDRRGPTDIGDIGARMSWVQLTEGHTPRSVQSPRPQALLVVAKEQQASRREHTGFRLGRQDSGSEATGFLPTDSEKASGPLGTLAEELSSYSRRKGGFSFRFGR.

An N-terminal signal peptide occupies residues 1–17 (MRCLCSWLCLLLPLSAC). A propeptide spanning residues 18 to 79 (FPLLDRRGPT…REHTGFRLGR (62 aa)) is cleaved from the precursor. The interval 63–100 (KEQQASRREHTGFRLGRQDSGSEATGFLPTDSEKASGP) is disordered. At Q80 the chain carries Pyrrolidone carboxylic acid. Residue F122 is modified to Phenylalanine amide.

Belongs to the RFamide neuropeptide family. In terms of assembly, ligand for the G-protein coupled receptor QRFPR/GPR103. Expressed in the brain with highest expression levels in the hypothalamus and optic nerve. Also expressed in the trachea and mammary gland.

The protein localises to the secreted. Functionally, stimulates feeding and grooming behavior, metabolic rate and locomotor activity and increases blood pressure. May have orexigenic activity. May promote aldosterone secretion by the adrenal gland. This is Orexigenic neuropeptide QRFP (Qrfp) from Rattus norvegicus (Rat).